A 793-amino-acid polypeptide reads, in one-letter code: DnaJ homolog subfamily C member 10 (793 aa).

An N-terminal signal peptide occupies residues 1 to 32 (MGVWLNKDDYIRDLKRIILCFLIVYMAILVGT). A J domain is found at 35 to 100 (DFYSLLGVSK…DLRKKYDKYG (66 aa)). In terms of domain architecture, Thioredoxin 1 spans 130–232 (EIITLERREF…ESLVSFAMQH (103 aa)). A disulfide bridge links Cys158 with Cys161. Trxb stretches follow at residues 235 to 350 (STVT…LPDF) and 348 to 463 (PDFE…PQNF). Thioredoxin domains are found at residues 454–553 (HVTT…IEDL), 557–662 (SVVS…SLRI), and 671–778 (VSTD…ISEK). A disulfide bridge connects residues Cys480 and Cys483. N-linked (GlcNAc...) asparagine glycosylation occurs at Asn530. Intrachain disulfides connect Cys588/Cys591 and Cys700/Cys703. The short motif at 790–793 (KDEL) is the Prevents secretion from ER element.

Interacts with EDEM1. Interacts with HSPA5 (via its J domain).

The protein resides in the endoplasmic reticulum lumen. Endoplasmic reticulum disulfide reductase involved both in the correct folding of proteins and degradation of misfolded proteins. Required for efficient folding of proteins in the endoplasmic reticulum by catalyzing the removal of non-native disulfide bonds formed during the folding of proteins, such as LDLR. Also involved in endoplasmic reticulum-associated degradation (ERAD) by reducing incorrect disulfide bonds in misfolded glycoproteins recognized by EDEM1. Interaction with HSPA5 is required its activity, not for the disulfide reductase activity, but to facilitate the release of DNAJC10 from its substrate. Promotes apoptotic signaling pathway in response to endoplasmic reticulum stress. The polypeptide is DnaJ homolog subfamily C member 10 (DNAJC10) (Homo sapiens (Human)).